The sequence spans 251 residues: 3-deoxy-manno-octulosonate cytidylyltransferase (251 aa).

It belongs to the KdsB family.

The protein resides in the cytoplasm. The enzyme catalyses 3-deoxy-alpha-D-manno-oct-2-ulosonate + CTP = CMP-3-deoxy-beta-D-manno-octulosonate + diphosphate. The protein operates within nucleotide-sugar biosynthesis; CMP-3-deoxy-D-manno-octulosonate biosynthesis; CMP-3-deoxy-D-manno-octulosonate from 3-deoxy-D-manno-octulosonate and CTP: step 1/1. It participates in bacterial outer membrane biogenesis; lipopolysaccharide biosynthesis. Functionally, activates KDO (a required 8-carbon sugar) for incorporation into bacterial lipopolysaccharide in Gram-negative bacteria. The polypeptide is 3-deoxy-manno-octulosonate cytidylyltransferase (Geotalea uraniireducens (strain Rf4) (Geobacter uraniireducens)).